A 392-amino-acid chain; its full sequence is MERRAGSRLRAWMLLLLLCPVQGRQKDSGSKWKVFLDQINRALENYEPCSSQNCSCYHGVIEEDLTPFRGGISRKMMAEVVRRKLGTHYQIIKNRLFREDDCMFPSRCSGVEHFILEVIHRLPDMEMVINVRDYPQVPKWMEPTIPVFSFSKTSEYHDIMYPAWTFWEGGPAVWPLYPTGLGRWDLFREDLLRSAAQWPWEKKNSTAYFRGSRTSPERDPLILLSRKNPKLVDAEYTKNQAWKSMKDTLGKPAAKDVHLIDHCKYRYLFNFRGVAASFRFKHLFLCGSLVFHVGDEWVEFFYPQLKPWVHYIPVKTDLSNVQELLQFVKANDDIAQEIAKRGSQFIINHLQMDDITCYWENLLTDYSKFLSYNVTRRKDYYQIVPRRLKTEL.

The first 23 residues, M1 to G23, serve as a signal peptide directing secretion. Intrachain disulfides connect C49-C56, C54-C357, C102-C108, and C263-C286. An N-linked (GlcNAc...) asparagine glycan is attached at N53. An interaction with the consensus sequence C-X-S-X-[PA]-C in peptide substrates region spans residues M103 to R107. The active-site Proton donor/acceptor is the D133. The interaction with the consensus sequence C-X-S-X-[PA]-C in peptide substrates stretch occupies residues A172–P178. Y177 is a binding site for UDP-alpha-D-glucose. N204 carries N-linked (GlcNAc...) asparagine glycosylation. Residues S212, R218, and V274–R279 each bind UDP-alpha-D-glucose. An N-linked (GlcNAc...) asparagine glycan is attached at N373. The Prevents secretion from ER motif lies at K389–L392.

The protein belongs to the glycosyltransferase 90 family. As to expression, widely expressed in newborn and adult tissues (at protein level).

It localises to the endoplasmic reticulum lumen. The enzyme catalyses L-seryl-[EGF-like domain protein] + UDP-alpha-D-xylose = 3-O-(beta-D-xylosyl)-L-seryl-[EGF-like domain protein] + UDP + H(+). The catalysed reaction is L-seryl-[EGF-like domain protein] + UDP-alpha-D-glucose = 3-O-(beta-D-glucosyl)-L-seryl-[EGF-like domain protein] + UDP + H(+). The protein operates within protein modification; protein glycosylation. Dual specificity glycosyltransferase that catalyzes the transfer of glucose and xylose from UDP-glucose and UDP-xylose, respectively, to a serine residue found in the consensus sequence of C-X-S-X-P-C. Specifically targets extracellular EGF repeats of protein such as CRB2, F7, F9 and NOTCH2. Acts as a positive regulator of Notch signaling by mediating O-glucosylation of Notch, leading to regulate muscle development. Notch glucosylation does not affect Notch ligand binding. Required during early development to promote gastrulation: acts by mediating O-glucosylation of CRB2, which is required for CRB2 localization to the cell membrane. In Mus musculus (Mouse), this protein is Protein O-glucosyltransferase 1.